We begin with the raw amino-acid sequence, 757 residues long: Xaa-Pro dipeptidyl-peptidase (757 aa).

Catalysis depends on charge relay system residues S348, D468, and H498.

Belongs to the peptidase S15 family. Homodimer.

It is found in the cytoplasm. The enzyme catalyses Hydrolyzes Xaa-Pro-|- bonds to release unblocked, N-terminal dipeptides from substrates including Ala-Pro-|-p-nitroanilide and (sequentially) Tyr-Pro-|-Phe-Pro-|-Gly-Pro-|-Ile.. In terms of biological role, removes N-terminal dipeptides sequentially from polypeptides having unsubstituted N-termini provided that the penultimate residue is proline. This Streptococcus pneumoniae (strain ATCC BAA-255 / R6) protein is Xaa-Pro dipeptidyl-peptidase.